Consider the following 626-residue polypeptide: Serine/threonine-protein kinase PknH (626 aa).

Over 1-403 the chain is Cytoplasmic; sequence MSDAQDSRVG…QTPRKTNPWP (403 aa). Residues 16-276 form the Protein kinase domain; that stretch reads YHLKRLLGRG…DLALAAHEAL (261 aa). Residues 22–30 and Lys45 contribute to the ATP site; that span reads LGRGGMGEV. Residue Asp139 is the Proton acceptor of the active site. Residue Thr170 is modified to Phosphothreonine. The disordered stretch occupies residues 292-396; the sequence is QESTLPAPPK…GGPSPWAQTP (105 aa). Composition is skewed to pro residues over residues 297–308 and 316–342; these read PAPPKPVPPPTM and RQPPAPPVTPPGVQPAPKPSYTPPAQP. Residues 343–355 show a composition bias toward low complexity; that stretch reads GPAGQRPGPTGQP. The helical transmembrane segment at 404–424 threads the bilayer; sequence LVAGAAAVVLVLVLGAIGIWI. The Extracellular portion of the chain corresponds to 425-626; sequence AIRPKPVQPP…AKIVDKVNKE (202 aa). Disulfide bonds link Cys482/Cys545 and Cys587/Cys604.

This sequence belongs to the protein kinase superfamily. Ser/Thr protein kinase family. Requires a divalent metal cation as cofactor. Post-translationally, autophosphorylated on threonine and serine residues. Dephosphorylated by PstP.

Its subcellular location is the cell membrane. The enzyme catalyses L-seryl-[protein] + ATP = O-phospho-L-seryl-[protein] + ADP + H(+). It catalyses the reaction L-threonyl-[protein] + ATP = O-phospho-L-threonyl-[protein] + ADP + H(+). With respect to regulation, inhibited by the kinase inhibitors staurosporine and H-7. Functionally, may regulate bacterial growth in response to external signals to facilitate adaptation to the host environment. In vitro, phosphorylates several substrates such as EmbR, DevR (DosR), DacB1 and Rv0681. This Mycobacterium tuberculosis (strain ATCC 25618 / H37Rv) protein is Serine/threonine-protein kinase PknH (pknH).